Here is a 514-residue protein sequence, read N- to C-terminus: Peptide chain release factor 3 (514 aa).

Residues 8 to 268 form the tr-type G domain; that stretch reads KKRRTFAIIS…TFLKFAPEPH (261 aa). Residues 17 to 24, 85 to 89, and 139 to 142 each bind GTP; these read SHPDAGKT, DTPGH, and NKLD.

This sequence belongs to the TRAFAC class translation factor GTPase superfamily. Classic translation factor GTPase family. PrfC subfamily.

The protein resides in the cytoplasm. Functionally, increases the formation of ribosomal termination complexes and stimulates activities of RF-1 and RF-2. It binds guanine nucleotides and has strong preference for UGA stop codons. It may interact directly with the ribosome. The stimulation of RF-1 and RF-2 is significantly reduced by GTP and GDP, but not by GMP. The chain is Peptide chain release factor 3 from Streptococcus pneumoniae (strain Hungary19A-6).